The sequence spans 334 residues: MAGWELLKLLLDDVQEHSTLIGKVWLTVLFIFRIFILSVAGESVWTDEQSDFICNTQQPGCTNVCYDQAFPISHVRYWVLQFLFVSTPTLIYLGHMVYLSKKEEKERQKENESRILVANEAQTEVHSSATKKIRIQGPLMCTYTTSVVFKSIFEAGFLLGQWYIYGFVMSPIFVCERIPCKHKVECFVSRPMEKTIFIIFMLVVSLISLLLNLMELIHLSFKCFQHGIKEGATCSPTGIPFNGAGNRMPPQEYTNPPSSNQDIDLPSYNKMSGGHNWSRIQMEQQVNGLVKPKCQCDCWSQSAISVVVSGAPGIISNMDAVKSNHQTSSKQQYV.

Residues 1-12 (MAGWELLKLLLD) lie on the Cytoplasmic side of the membrane. A helical transmembrane segment spans residues 13 to 35 (DVQEHSTLIGKVWLTVLFIFRIF). Residues 36-75 (ILSVAGESVWTDEQSDFICNTQQPGCTNVCYDQAFPISHV) are Extracellular-facing. A helical membrane pass occupies residues 76–98 (RYWVLQFLFVSTPTLIYLGHMVY). The Cytoplasmic portion of the chain corresponds to 99 to 153 (LSKKEEKERQKENESRILVANEAQTEVHSSATKKIRIQGPLMCTYTTSVVFKSIF). Residues 154–176 (EAGFLLGQWYIYGFVMSPIFVCE) form a helical membrane-spanning segment. At 177-207 (RIPCKHKVECFVSRPMEKTIFIIFMLVVSLI) the chain is on the extracellular side. Residues 208 to 230 (SLLLNLMELIHLSFKCFQHGIKE) form a helical membrane-spanning segment. Over 231 to 334 (GATCSPTGIP…HQTSSKQQYV (104 aa)) the chain is Cytoplasmic.

The protein belongs to the connexin family. Alpha-type (group II) subfamily. In terms of assembly, a connexon is composed of a hexamer of connexins. Resides primarily in the ovary, oocytes and early embryos.

It is found in the cell membrane. Its subcellular location is the cell junction. The protein localises to the gap junction. Functionally, one gap junction consists of a cluster of closely packed pairs of transmembrane channels, the connexons, through which materials of low MW diffuse from one cell to a neighboring cell. This is Gap junction alpha-2 protein (gja2) from Xenopus laevis (African clawed frog).